The primary structure comprises 160 residues: Ribosomal RNA large subunit methyltransferase H (160 aa).

Leucine 76 and glycine 108 together coordinate S-adenosyl-L-methionine.

It belongs to the RNA methyltransferase RlmH family. Homodimer.

Its subcellular location is the cytoplasm. The enzyme catalyses pseudouridine(1915) in 23S rRNA + S-adenosyl-L-methionine = N(3)-methylpseudouridine(1915) in 23S rRNA + S-adenosyl-L-homocysteine + H(+). Functionally, specifically methylates the pseudouridine at position 1915 (m3Psi1915) in 23S rRNA. This chain is Ribosomal RNA large subunit methyltransferase H, found in Xanthobacter autotrophicus (strain ATCC BAA-1158 / Py2).